Here is a 108-residue protein sequence, read N- to C-terminus: T-cell acute lymphocytic leukemia protein 2 (108 aa).

The region spanning Thr-2–Leu-54 is the bHLH domain. Residues Asp-89 to Pro-108 are disordered.

This chain is T-cell acute lymphocytic leukemia protein 2 (TAL2), found in Homo sapiens (Human).